The sequence spans 475 residues: MSDFDEFERQLNENKQERDKENRHRKRSHSRSRSRDRKRRSRSRDRRNRDQRSASRDRRRRSKPLTRGAKEEHGGLIRSPRHEKKKKVRKYWDVPPPGFEHITPMQYKAMQAAGQIPATALLPTMTPDGLAVTPTPVPVVGSQMTRQARRLYVGNIPFGITEEAMMDFFNAQMRLGGLTQAPGNPVLAVQINQDKNFAFLEFRSVDETTQAMAFDGIIFQGQSLKIRRPHDYQPLPGMSENPSVYVPGVVSTVVPDSAHKLFIGGLPNYLNDDQVKELLTSFGPLKAFNLVKDSATGLSKGYAFCEYVDINVTDQAIAGLNGMQLGDKKLLVQRASVGAKNATLVSPPSTINQTPVTLQVPGLMSSQVQMGGHPTEVLCLMNMVLPEELLDDEEYEEIVEDVRDECSKYGLVKSIEIPRPVDGVEVPGCGKIFVEFTSVFDCQKAMQGLTGRKFANRVVVTKYCDPDSYHRRDFW.

A disordered region spans residues 1-90; sequence MSDFDEFERQ…RHEKKKKVRK (90 aa). Serine 2 is subject to N-acetylserine. Phosphoserine is present on serine 2. The required for interaction with PRPF19 stretch occupies residues 2 to 93; the sequence is SDFDEFERQL…KKKKVRKYWD (92 aa). A compositionally biased stretch (basic and acidic residues) spans 7–22; sequence FERQLNENKQERDKEN. Lysine 15 carries the 5-hydroxylysine; by JMJD6; alternate modification. Lysine 15 participates in a covalent cross-link: Glycyl lysine isopeptide (Lys-Gly) (interchain with G-Cter in SUMO2); alternate. Positions 17-47 are necessary and sufficient to stimulate pre-mRNAs 3'-end cleavage in a CFIm complex-dependent manner; the sequence is ERDKENRHRKRSHSRSRSRDRKRRSRSRDRR. Basic residues predominate over residues 23–46; sequence RHRKRSHSRSRSRDRKRRSRSRDR. Residues 47 to 56 are compositionally biased toward basic and acidic residues; sequence RNRDQRSASR. Lysine 70 is covalently cross-linked (Glycyl lysine isopeptide (Lys-Gly) (interchain with G-Cter in SUMO2); alternate). Lysine 70 carries the N6-acetyllysine; alternate modification. A Phosphoserine modification is found at serine 79. Positions 79 to 89 are enriched in basic residues; sequence SPRHEKKKKVR. RRM domains are found at residues 149 to 231, 259 to 337, and 385 to 466; these read RRLY…RPHD, HKLF…RASV, and LPEE…YCDP. At lysine 276 the chain carries 5-hydroxylysine; by JMJD6. Serine 294 carries the post-translational modification Phosphoserine.

Belongs to the splicing factor SR family. As to quaternary structure, interacts with U2AF1L4. Heterodimer with U2AF1. Binds unphosphorylated SF1. Interacts with SCAF11 and SNW1. Interacts with ZRSR2/U2AF1-RS2. Interacts with RBM17. Interacts with PRPF19; the interaction is direct. Interacts with POLR2A (via the C-terminal domain); recruits PRPF19 and the Prp19 complex to the pre-mRNA. Interacts with KHDC4 (Isoform 2). Interacts with ZRSR2. Interacts with the SF3B complex composed of SF3B1, SF3B2, SF3B3, SF3B4, SF3B5, SF3B6 and PHF5A. Interacts (via N-terminus) with CPSF7 (via C-terminus); this interaction stimulates pre-mRNA 3'-end processing by promoting the recruitment of the CFIm complex to cleavage and polyadenylation signals. Interacts with ARGLU1; interaction may be involved in ARGLU1-mediated modulation of alternative splicing. Post-translationally, lysyl-hydroxylation at Lys-15 and Lys-276 affects the mRNA splicing activity of the protein, leading to regulate some, but not all, alternative splicing events.

Its subcellular location is the nucleus. In terms of biological role, plays a role in pre-mRNA splicing and 3'-end processing. By recruiting PRPF19 and the PRP19C/Prp19 complex/NTC/Nineteen complex to the RNA polymerase II C-terminal domain (CTD), and thereby pre-mRNA, may couple transcription to splicing. Induces cardiac troponin-T (TNNT2) pre-mRNA exon inclusion in muscle. Regulates the TNNT2 exon 5 inclusion through competition with MBNL1. Binds preferentially to a single-stranded structure within the polypyrimidine tract of TNNT2 intron 4 during spliceosome assembly. Required for the export of mRNA out of the nucleus, even if the mRNA is encoded by an intron-less gene. Represses the splicing of MAPT/Tau exon 10. Positively regulates pre-mRNA 3'-end processing by recruiting the CFIm complex to cleavage and polyadenylation signals. The protein is Splicing factor U2AF 65 kDa subunit (U2AF2) of Homo sapiens (Human).